The primary structure comprises 303 residues: MDNNEKEKSKSELLVVTGLSGAGKSLVIQCLEDMGYFCVDNLPPVLLPKFVELMEQGNPSLRKVAIAIDLRGKELFNSLVAVVDKVKSESDVIIDVMFLEASTEKLISRYKETRRAHPLMEQGKKSLINAINDEREHLSQIRSIANFVIDTTKLSPKELKERIRRYYEDEEFETFTINVTSFGFKHGIQMDADLVFDVRFLPNPYYVVDLRPLTGLDKDVYNYVMKWKETEIFFEKLTDLLDFMIPGYKKEGKSQLVIAIGCTGGQHRSVALAERLGNYLNEVFEYNVYVHHRDAHIESGEKK.

An ATP-binding site is contributed by Gly-18–Ser-25. Asp-69 to Gly-72 is a GTP binding site.

This sequence belongs to the RapZ-like family.

Functionally, displays ATPase and GTPase activities. The chain is Nucleotide-binding protein SAR0820 from Staphylococcus aureus (strain MRSA252).